The primary structure comprises 286 residues: Probable transport system permease protein NifC (286 aa).

Transmembrane regions (helical) follow at residues 34-54, 75-95, 114-134, 152-172, 216-236, and 257-277; these read LFLA…ISMI, IILS…IGTP, IFVE…LLLA, VIFT…ALYV, GLIL…MFAG, and IKMA…LLLL. Residues 75-278 enclose the ABC transmembrane type-1 domain; the sequence is IILSFVTSLI…IMTFVLLLLV (204 aa).

It belongs to the binding-protein-dependent transport system permease family. CysTW subfamily.

The protein localises to the cell membrane. Its function is as follows. May be involved in molybdenum transport. The sequence is that of Probable transport system permease protein NifC (nifC) from Clostridium pasteurianum.